The following is a 65-amino-acid chain: Small ribosomal subunit protein eS27 (65 aa).

Zn(2+) is bound by residues C20, C23, C39, and C42. Residues 20 to 42 form a C4-type zinc finger; it reads CIDCGNEQIVFSHPATRVRCLVC.

Belongs to the eukaryotic ribosomal protein eS27 family. Part of the 30S ribosomal subunit. It depends on Zn(2+) as a cofactor.

This is Small ribosomal subunit protein eS27 from Pyrococcus horikoshii (strain ATCC 700860 / DSM 12428 / JCM 9974 / NBRC 100139 / OT-3).